A 373-amino-acid polypeptide reads, in one-letter code: Tryptophan--tRNA ligase (373 aa).

The short motif at 79–87 (PSGKFHFGH) is the 'HIGH' region element. The 'KMSKS' region motif lies at 257 to 261 (KMSSS).

The protein belongs to the class-I aminoacyl-tRNA synthetase family.

Its subcellular location is the cytoplasm. It carries out the reaction tRNA(Trp) + L-tryptophan + ATP = L-tryptophyl-tRNA(Trp) + AMP + diphosphate + H(+). This chain is Tryptophan--tRNA ligase, found in Hyperthermus butylicus (strain DSM 5456 / JCM 9403 / PLM1-5).